The sequence spans 422 residues: Testin (422 aa).

The PET domain maps to 92–199 (MILTNPVPAK…GDVKLPSEMD (108 aa)). 2 disordered regions span residues 135–162 (QPVA…QDPS) and 194–226 (LPSE…EDKS). The segment covering 194 to 212 (LPSEMDVKPGDRSSLDGGD) has biased composition (basic and acidic residues). 3 LIM zinc-binding domains span residues 234-297 (YSCY…CDSE), 299-359 (PRCA…NHAV), and 362-422 (QGCH…MMMS).

The protein belongs to the prickle / espinas / testin family. Interacts via LIM domain 1 with ZYX. Interacts (via LIM domain 3) with ENAH and VASP. Interacts with ALKBH4, talin, actin, alpha-actinin, GRIP1 and PXN. Interacts (via LIM domain 2) with ACTL7A (via N-terminus). Heterodimer with ACTL7A; the heterodimer interacts with ENAH to form a heterotrimer.

The protein resides in the cytoplasm. The protein localises to the cell junction. Its subcellular location is the focal adhesion. In terms of biological role, scaffold protein that may play a role in cell adhesion, cell spreading and in the reorganization of the actin cytoskeleton. Plays a role in the regulation of cell proliferation. May act as a tumor suppressor. This is Testin (TES) from Monodelphis domestica (Gray short-tailed opossum).